Here is a 1421-residue protein sequence, read N- to C-terminus: ALK tyrosine kinase receptor homolog scd-2 (1421 aa).

An N-terminal signal peptide occupies residues M1–A20. Topologically, residues I21 to T903 are extracellular. N-linked (GlcNAc...) asparagine glycans are attached at residues N24, N44, N70, N83, N119, and N201. The LDL-receptor class A domain occupies Q300 to C338. 3 disulfide bridges follow: C301–C317, C309–C329, and C323–C338. The MAM domain occupies G339–E542. N-linked (GlcNAc...) asparagine glycans are attached at residues N342, N362, N495, N533, N546, N633, N726, N793, N849, N873, and N893. The chain crosses the membrane as a helical span at residues L904 to V924. At Y925 to R1421 the chain is on the cytoplasmic side. Residues I976–V1261 enclose the Protein kinase domain. Residues L982–V990 and K1003 contribute to the ATP site. The active-site Proton acceptor is D1106.

It belongs to the protein kinase superfamily. Tyr protein kinase family. Insulin receptor subfamily. Interacts (via cytoplasmic domain) with fsn-1 (via SPRY domain). In terms of tissue distribution, expressed in AIA sensory neurons.

The protein localises to the cell membrane. It catalyses the reaction L-tyrosyl-[protein] + ATP = O-phospho-L-tyrosyl-[protein] + ADP + H(+). Its function is as follows. Probable tyrosine-protein kinase receptor which regulates the dauer/non-dauer developmental decision probably by controlling daf-3 transcriptional activity in parallel or together with the TGF-beta pathway. Regulates integration of conflicting sensory cues in AIA interneurons. May act as a receptor for hen-1. In AWA neurons, together with hen-1, plays a role in regulating olfactory adaptation by controlling the forgetting sensory responses to odorants such as diacetyl. The polypeptide is ALK tyrosine kinase receptor homolog scd-2 (Caenorhabditis elegans).